The primary structure comprises 128 residues: Large ribosomal subunit protein bL19 (128 aa).

This sequence belongs to the bacterial ribosomal protein bL19 family.

This protein is located at the 30S-50S ribosomal subunit interface and may play a role in the structure and function of the aminoacyl-tRNA binding site. In Verminephrobacter eiseniae (strain EF01-2), this protein is Large ribosomal subunit protein bL19.